The sequence spans 375 residues: Probable L-tyrosine/L-aspartate decarboxylase (375 aa).

Lys226 is subject to N6-(pyridoxal phosphate)lysine.

The protein belongs to the group II decarboxylase family. MfnA subfamily. The cofactor is pyridoxal 5'-phosphate.

The enzyme catalyses L-tyrosine + H(+) = tyramine + CO2. It catalyses the reaction L-aspartate + H(+) = beta-alanine + CO2. The protein operates within cofactor biosynthesis; methanofuran biosynthesis. Its pathway is cofactor biosynthesis; coenzyme A biosynthesis. Its function is as follows. Catalyzes the decarboxylation of L-tyrosine to produce tyramine for methanofuran biosynthesis. Can also catalyze the decarboxylation of L-aspartate to produce beta-alanine for coenzyme A (CoA) biosynthesis. The sequence is that of Probable L-tyrosine/L-aspartate decarboxylase from Methanocella arvoryzae (strain DSM 22066 / NBRC 105507 / MRE50).